The primary structure comprises 319 residues: Histidinol-phosphate aminotransferase 1 (319 aa).

Residue K182 is modified to N6-(pyridoxal phosphate)lysine.

This sequence belongs to the class-II pyridoxal-phosphate-dependent aminotransferase family. Histidinol-phosphate aminotransferase subfamily. The cofactor is pyridoxal 5'-phosphate.

It catalyses the reaction L-histidinol phosphate + 2-oxoglutarate = 3-(imidazol-4-yl)-2-oxopropyl phosphate + L-glutamate. It participates in amino-acid biosynthesis; L-histidine biosynthesis; L-histidine from 5-phospho-alpha-D-ribose 1-diphosphate: step 7/9. This Archaeoglobus fulgidus (strain ATCC 49558 / DSM 4304 / JCM 9628 / NBRC 100126 / VC-16) protein is Histidinol-phosphate aminotransferase 1 (hisC1).